Reading from the N-terminus, the 105-residue chain is Large ribosomal subunit protein eL42 (105 aa).

Residues 28–57 (YKKGKDSLAAQGKRRYDRKQSGYGGQTKPV) are disordered.

It belongs to the eukaryotic ribosomal protein eL42 family.

The protein is Large ribosomal subunit protein eL42 (RPL44) of Gossypium hirsutum (Upland cotton).